A 569-amino-acid polypeptide reads, in one-letter code: Probable protein phosphatase 2C BIPP2C1 (569 aa).

Disordered regions lie at residues Glu120–Gly214 and Ser251–Ile279. The segment covering Glu179 to Gly188 has biased composition (basic and acidic residues). A PPM-type phosphatase domain is found at Ala329 to Val564. Mn(2+) contacts are provided by Asp358, Gly359, Asp488, and Asp555.

It belongs to the PP2C family. Requires Mg(2+) as cofactor. It depends on Mn(2+) as a cofactor.

It carries out the reaction O-phospho-L-seryl-[protein] + H2O = L-seryl-[protein] + phosphate. It catalyses the reaction O-phospho-L-threonyl-[protein] + H2O = L-threonyl-[protein] + phosphate. Functionally, may play a role in responses to biotic and abiotic stresses. In Oryza sativa subsp. japonica (Rice), this protein is Probable protein phosphatase 2C BIPP2C1 (BIPP2C1).